A 385-amino-acid chain; its full sequence is Succinyl-diaminopimelate desuccinylase (385 aa).

Position 73 (His73) interacts with Zn(2+). Asp75 is an active-site residue. Asp106 contributes to the Zn(2+) binding site. Glu141 serves as the catalytic Proton acceptor. Residues Glu142, Glu170, and His359 each coordinate Zn(2+).

Belongs to the peptidase M20A family. DapE subfamily. Homodimer. Zn(2+) serves as cofactor. The cofactor is Co(2+).

It catalyses the reaction N-succinyl-(2S,6S)-2,6-diaminopimelate + H2O = (2S,6S)-2,6-diaminopimelate + succinate. It functions in the pathway amino-acid biosynthesis; L-lysine biosynthesis via DAP pathway; LL-2,6-diaminopimelate from (S)-tetrahydrodipicolinate (succinylase route): step 3/3. In terms of biological role, catalyzes the hydrolysis of N-succinyl-L,L-diaminopimelic acid (SDAP), forming succinate and LL-2,6-diaminopimelate (DAP), an intermediate involved in the bacterial biosynthesis of lysine and meso-diaminopimelic acid, an essential component of bacterial cell walls. The polypeptide is Succinyl-diaminopimelate desuccinylase (Methylorubrum extorquens (strain PA1) (Methylobacterium extorquens)).